Here is a 279-residue protein sequence, read N- to C-terminus: MAEALCSGSVASPCGEVGVGFAAGLVRGAAAAAALAESVPIGGYSSKSTFPSGRVALTERKARPLPRNLEAAHGQMNLTIGKAMRWWEKCLQPNMREIESAQDLADSLLNAGDKLVVVDFFSPGCGGCRALHPKIAQLAEKNPEVLFLQVNYEKHKSMCYSLHVHVLPFFRFYRGAQGRVSSFSCTNATIKKFKDALAKHGPDRCGLGPAKGLEESELMALAINRDLNFTYTPNQDLVPIADALLKEAAAPGGPWLPLPATATQLFIQGSENSLLSSGR.

Positions 56–202 (ALTERKARPL…FKDALAKHGP (147 aa)) constitute a Thioredoxin domain. Active-site nucleophile residues include cysteine 125 and cysteine 128. Cysteine 125 and cysteine 128 are disulfide-bonded.

It belongs to the thioredoxin family.

Probable thiol-disulfide oxidoreductase that may participate in various redox reactions. The sequence is that of Thioredoxin-like 1-1, chloroplastic from Oryza sativa subsp. japonica (Rice).